Reading from the N-terminus, the 342-residue chain is Cellular tumor antigen p53 (342 aa).

A transcription activation (acidic) region spans residues 1–35 (MEEADLTLPLSQDTFHDLWNNVFLSTENESLPPPE). A DNA-binding region spans residues 68-255 (NYAGEHGFNL…KTEEGNLEKS (188 aa)). Zn(2+)-binding residues include cysteine 142, histidine 145, cysteine 201, and cysteine 205. Residues 236–243 (RVCACPGR) form an interaction with DNA region. Positions 244–256 (DRKTEEGNLEKSG) are enriched in basic and acidic residues. The tract at residues 244–287 (DRKTEEGNLEKSGTKQTKKRKSAPAPDTSTAKKSKSASSGEDED) is disordered. The short motif at 261 to 278 (KKRKSAPAPDTSTAKKSK) is the Bipartite nuclear localization signal element. The segment covering 271 to 282 (TSTAKKSKSASS) has biased composition (low complexity). Positions 288-317 (KEIYTLSIRGRNRYLWFKSLNDGLELMDKT) are oligomerization. Positions 302–313 (LWFKSLNDGLEL) match the Nuclear export signal motif. The interval 318 to 342 (GPKIKQEIPAPSSGKRLLKGGSDSD) is disordered. Residues 319 to 336 (PKIKQEIPAPSSGKRLLK) form a basic (repression of DNA-binding) region.

The protein belongs to the p53 family. As to quaternary structure, binds DNA as a homotetramer. The cofactor is Zn(2+).

The protein localises to the cytoplasm. Its subcellular location is the nucleus. Its function is as follows. Multifunctional transcription factor that induces cell cycle arrest, DNA repair or apoptosis upon binding to its target DNA sequence. Acts as a tumor suppressor in many tumor types; induces growth arrest or apoptosis depending on the physiological circumstances and cell type. Negatively regulates cell division by controlling expression of a set of genes required for this process. One of the activated genes is an inhibitor of cyclin-dependent kinases. Apoptosis induction seems to be mediated either by stimulation of BAX and FAS antigen expression, or by repression of Bcl-2 expression. The sequence is that of Cellular tumor antigen p53 (tp53) from Xiphophorus maculatus (Southern platyfish).